Consider the following 391-residue polypeptide: ATPase GET3C (391 aa).

The transit peptide at 1-50 (MAALLLLNRVSRSTSSISLHRVAGTLGFNSFNAQIHGDRISGTLFRVRSL) directs the protein to the mitochondrion. 77-84 (KGGVGKTS) is a binding site for ATP. Aspartate 106 is a catalytic residue. ATP is bound at residue asparagine 328.

Belongs to the arsA ATPase family.

Its subcellular location is the mitochondrion matrix. It catalyses the reaction ATP + H2O = ADP + phosphate + H(+). This is ATPase GET3C from Arabidopsis thaliana (Mouse-ear cress).